The following is a 201-amino-acid chain: NAD(P)H dehydrogenase (quinone) (201 aa).

The region spanning Ile-7–Val-192 is the Flavodoxin-like domain. Residues Ser-13 to Ile-18 and Thr-81 to Phe-83 each bind FMN. Position 15 (Tyr-15) interacts with NAD(+). Residue Trp-101 participates in substrate binding. FMN-binding positions include Ser-116 to Gly-121 and His-136.

Belongs to the WrbA family. Requires FMN as cofactor.

The catalysed reaction is a quinone + NADH + H(+) = a quinol + NAD(+). The enzyme catalyses a quinone + NADPH + H(+) = a quinol + NADP(+). This chain is NAD(P)H dehydrogenase (quinone), found in Shigella sonnei (strain Ss046).